The primary structure comprises 211 residues: Troponin I, cardiac muscle (211 aa).

Residues 1–23 form a disordered region; that stretch reads MADESGDAAGCPPPAPAPIRRQS. An N-acetylalanine modification is found at A2. The residue at position 5 (S5) is a Phosphoserine. S23 and S24 each carry phosphoserine; by PKA and PKD/PRKD1. A Phosphotyrosine modification is found at Y27. T32 bears the Phosphothreonine; by STK4/MST1 mark. Positions 33-80 are involved in binding TNC; the sequence is EPHAKKKSKISASRKLQLKTLMLQIAKQELEREAEERRGEKGRALSTR. 2 positions are modified to phosphoserine; by PKC/PRKCE: S43 and S45. T52 carries the phosphothreonine; by STK4/MST1 modification. At S78 the chain carries Phosphoserine. A Phosphothreonine modification is found at T79. A phosphothreonine; by STK4/MST1 mark is found at T130 and T144. The interval 130–150 is involved in binding TNC and actin; sequence TQKIFDLRGKFKRPTLRRVRI. At S151 the chain carries Phosphoserine; by PAK3. S167 is subject to Phosphoserine. T182 carries the post-translational modification Phosphothreonine. Position 200 is a phosphoserine (S200).

Belongs to the troponin I family. In terms of assembly, binds to actin and tropomyosin. Interacts with TRIM63. Interacts with STK4/MST1. Post-translationally, phosphorylated at Ser-23 and Ser-24 by PRKD1; phosphorylation reduces myofilament calcium sensitivity. Phosphorylated preferentially at Thr-32. Phosphorylation by STK4/MST1 alters its binding affinity to TNNC1 (cardiac Tn-C) and TNNT2 (cardiac Tn-T). Phosphorylated at Ser-43 and Ser-45 by PRKCE; phosphorylation increases myocardium contractile dysfunction.

In terms of biological role, troponin I is the inhibitory subunit of troponin, the thin filament regulatory complex which confers calcium-sensitivity to striated muscle actomyosin ATPase activity. The chain is Troponin I, cardiac muscle (TNNI3) from Canis lupus familiaris (Dog).